A 337-amino-acid chain; its full sequence is 2-oxoglutarate receptor 1 (337 aa).

Residues 1–34 (MNEPLDYLANASDFPDYAAAFGNCTDENIPLKMH) lie on the Extracellular side of the membrane. N-linked (GlcNAc...) asparagine glycans are attached at residues Asn10 and Asn23. Residues 35 to 55 (YLPVIYGIIFLVGFPGNAVVI) traverse the membrane as a helical segment. Over 56–69 (STYIFKMRPWKSST) the chain is Cytoplasmic. The chain crosses the membrane as a helical span at residues 70-90 (IIMLNLACTDLLYLTSLPFLI). Residues 91-116 (HYYASGENWIFGDFMCKFIRFSFHFN) are Extracellular-facing. Cys106 and Cys183 form a disulfide bridge. Residues 117–137 (LYSSILFLTCFSIFRYCVIIH) form a helical membrane-spanning segment. Over 138–151 (PMSCFSIHKTRCAV) the chain is Cytoplasmic. A helical membrane pass occupies residues 152–172 (VACAVVWIISLVAVIPMTFLI). Over 173–201 (TSTNRTNRSACLDLTSSDELNTIKWYNLI) the chain is Extracellular. 2 N-linked (GlcNAc...) asparagine glycosylation sites follow: Asn176 and Asn179. A helical transmembrane segment spans residues 202–222 (LTATTFCLPLVIVTLCYTTII). The Cytoplasmic portion of the chain corresponds to 223 to 242 (HTLTHGLQTDSCLKQKARRL). Residues 243–263 (TILLLLAFYVCFLPFHILRVI) traverse the membrane as a helical segment. The Extracellular segment spans residues 264–284 (RIESRLLSISCSIENQIHEAY). The chain crosses the membrane as a helical span at residues 285–305 (IVSRPLAALNTFGNLLLYVVV). The Cytoplasmic segment spans residues 306-337 (SDNFQQAVCSTVRCKVSGNLEQAKKISYSNNP).

The protein belongs to the G-protein coupled receptor 1 family. In terms of tissue distribution, detected in kidney and, to a lower extent, in placenta. Not detected in brain tissues including the frontal cortex, caudate putamen, thalamus, hypothalamus, hippocampus or pons.

The protein resides in the cell membrane. Its function is as follows. G protein-coupled receptor for dicarboxylates and amino dicarboxylates. Receptor for itaconate, a metabolite produced by myeloid lineages. In the respiratory epithelium, couples the binding of itaconate to the activation of GNA11 and downstream intracellular Ca(2+) release, leading to mucocilliary clearance of airborne pathogens. Receptor for leukotriene E4 (LTE4) produced by mast cells upon allergic inflammation. Binds with high affinity to LTE4 and elicits mucin release from pulmonary epithelium in response to airborne fungi allergens. Regulates mucin-producing goblet cell homeostasis. Receptor for alpha-ketoglutarate produced by proximal tubule renal cells upon metabolic alkalosis. In an intrarenal paracrine signaling pathway, binds alpha-ketoglutarate and drives transepithelial salt reabsorption and bicarbonate secretion by SLC26A4/pendrin-positive intercalated cells. This is 2-oxoglutarate receptor 1 (OXGR1) from Homo sapiens (Human).